The following is a 272-amino-acid chain: Ethanolamine ammonia-lyase small subunit (272 aa).

Positions 161, 182, and 211 each coordinate adenosylcob(III)alamin.

The protein belongs to the EutC family. In terms of assembly, the basic unit is a heterodimer which dimerizes to form tetramers. The heterotetramers trimerize; 6 large subunits form a core ring with 6 small subunits projecting outwards. Adenosylcob(III)alamin is required as a cofactor.

The protein resides in the bacterial microcompartment. It carries out the reaction ethanolamine = acetaldehyde + NH4(+). It functions in the pathway amine and polyamine degradation; ethanolamine degradation. Its function is as follows. Catalyzes the deamination of various vicinal amino-alcohols to oxo compounds. Allows this organism to utilize ethanolamine as the sole source of nitrogen and carbon in the presence of external vitamin B12. The chain is Ethanolamine ammonia-lyase small subunit from Pseudomonas putida (strain W619).